The sequence spans 556 residues: General transcription factor IIF subunit 1 (556 aa).

2 disordered regions span residues 82 to 128 and 226 to 499; these read TMTS…PAAA and SRLQ…PFTE. Residues 84 to 128 show a composition bias toward low complexity; the sequence is TSAPNGTNSTGTTPNTTTTTTTTTTTTTTTTTAAGTPGAPNPAAA. Residues 245 to 275 show a composition bias toward basic and acidic residues; that stretch reads SGKKSIEELEEAEHRNRNEDPNRYKTTNEEK. Acidic residues-rich tracts occupy residues 291–338 and 378–394; these read GNGE…DVDL and GDDEDDDEDDEDPDQDD. Basic and acidic residues-rich tracts occupy residues 415–427 and 450–461; these read VKKEDDGGKDSKS and NKSDSSVDNRES. The segment covering 469–492 has biased composition (low complexity); the sequence is SSPQAVQPNSPSQQQQQQQQNIDP.

Belongs to the TFIIF alpha subunit family. Heterodimer of an alpha and a beta subunit.

It is found in the nucleus. TFIIF is a general transcription initiation factor that binds to RNA polymerase II and helps to recruit it to the initiation complex in collaboration with TFIIB. It promotes transcription elongation. The protein is General transcription factor IIF subunit 1 (gtf2f1) of Dictyostelium discoideum (Social amoeba).